We begin with the raw amino-acid sequence, 247 residues long: Translation initiation factor IF-3 (247 aa).

Disordered regions lie at residues 1–20 (MIRE…TNRR) and 188–247 (LVRQ…PTAS). A needed for vegetative and developmental functions, but not for viability region spans residues 182–247 (AQKARELVRQ…AAEAQSPTAS (66 aa)). The segment covering 207–217 (AGKSAAGASSG) has biased composition (low complexity). Over residues 218-232 (AEEKAEETAEEKKEA) the composition is skewed to basic and acidic residues. The segment covering 233-247 (QAAPAAAEAQSPTAS) has biased composition (low complexity).

It belongs to the IF-3 family. In terms of assembly, monomer.

The protein localises to the cytoplasm. Its function is as follows. IF-3 binds to the 30S ribosomal subunit and shifts the equilibrium between 70S ribosomes and their 50S and 30S subunits in favor of the free subunits, thus enhancing the availability of 30S subunits on which protein synthesis initiation begins. This is Translation initiation factor IF-3 from Myxococcus xanthus.